A 520-amino-acid polypeptide reads, in one-letter code: Glycosyl hydrolase family 109 protein 5 (520 aa).

An N-terminal signal peptide occupies residues 1-27 (MRTFKSLMISLCMGTTLCMCLPQTTTA). Residues 77 to 78 (MR), aspartate 99, 147 to 150 (WLHH), 167 to 168 (EV), and asparagine 196 each bind NAD(+). Substrate-binding positions include tyrosine 225, arginine 248, 260–263 (YATH), and tyrosine 338. Tyrosine 260 serves as a coordination point for NAD(+).

This sequence belongs to the Gfo/Idh/MocA family. Glycosyl hydrolase 109 subfamily. It depends on NAD(+) as a cofactor.

Glycosidase. The chain is Glycosyl hydrolase family 109 protein 5 from Phocaeicola vulgatus (strain ATCC 8482 / DSM 1447 / JCM 5826 / CCUG 4940 / NBRC 14291 / NCTC 11154) (Bacteroides vulgatus).